The chain runs to 336 residues: Cell division protein ZipA (336 aa).

Topologically, residues M1–E2 are periplasmic. Residues L3–L23 form a helical membrane-spanning segment. Residues W24 to S336 lie on the Cytoplasmic side of the membrane.

The protein belongs to the ZipA family. As to quaternary structure, interacts with FtsZ via their C-terminal domains.

It localises to the cell inner membrane. Its function is as follows. Essential cell division protein that stabilizes the FtsZ protofilaments by cross-linking them and that serves as a cytoplasmic membrane anchor for the Z ring. Also required for the recruitment to the septal ring of downstream cell division proteins. The polypeptide is Cell division protein ZipA (Actinobacillus pleuropneumoniae serotype 5b (strain L20)).